We begin with the raw amino-acid sequence, 235 residues long: Probable transcriptional regulatory protein CJJ81176_1187 (235 aa).

This sequence belongs to the TACO1 family.

The protein localises to the cytoplasm. The polypeptide is Probable transcriptional regulatory protein CJJ81176_1187 (Campylobacter jejuni subsp. jejuni serotype O:23/36 (strain 81-176)).